The primary structure comprises 125 residues: Fumarate reductase subunit D (125 aa).

The next 3 helical transmembrane spans lie at 30 to 50 (FAML…LGVI), 62 to 82 (AFAT…LPMW), and 105 to 125 (VACY…IFMI).

It belongs to the FrdD family. In terms of assembly, part of an enzyme complex containing four subunits: a flavoprotein (FrdA), an iron-sulfur protein (FrdB), and two hydrophobic anchor proteins (FrdC and FrdD).

Its subcellular location is the cell inner membrane. In terms of biological role, anchors the catalytic components of the fumarate reductase complex to the cell membrane, binds quinones. The chain is Fumarate reductase subunit D from Vibrio parahaemolyticus serotype O3:K6 (strain RIMD 2210633).